A 575-amino-acid chain; its full sequence is Chaperonin CPN60-1, mitochondrial (575 aa).

Residues 1–32 (MHRFATGLASKARLARNGANQIASRSNWRRNY) constitute a mitochondrion transit peptide.

This sequence belongs to the chaperonin (HSP60) family.

It is found in the mitochondrion. Functionally, implicated in mitochondrial protein import and macromolecular assembly. May facilitate the correct folding of imported proteins. May also prevent misfolding and promote the refolding and proper assembly of unfolded polypeptides generated under stress conditions in the mitochondrial matrix. In Cucurbita maxima (Pumpkin), this protein is Chaperonin CPN60-1, mitochondrial (CPN60-1).